Consider the following 542-residue polypeptide: Chaperonin GroEL 1 (542 aa).

Residues 30–33 (TLGP), K51, 87–91 (DGTTT), G415, 480–482 (NAA), and D496 contribute to the ATP site.

This sequence belongs to the chaperonin (HSP60) family. In terms of assembly, forms a cylinder of 14 subunits composed of two heptameric rings stacked back-to-back. Interacts with the co-chaperonin GroES.

The protein localises to the cytoplasm. It carries out the reaction ATP + H2O + a folded polypeptide = ADP + phosphate + an unfolded polypeptide.. Functionally, together with its co-chaperonin GroES, plays an essential role in assisting protein folding. The GroEL-GroES system forms a nano-cage that allows encapsulation of the non-native substrate proteins and provides a physical environment optimized to promote and accelerate protein folding. This Nitrobacter winogradskyi (strain ATCC 25391 / DSM 10237 / CIP 104748 / NCIMB 11846 / Nb-255) protein is Chaperonin GroEL 1.